Reading from the N-terminus, the 371-residue chain is MEPIWAVGLMTGTVLDGNIDVALIKTDGERIAEFGPYALAPYPDWIRRLLEETLAQARVWNFNGPEPAIFKEAEEALTRAQSAAVKELVEGFGLTMADIGVVGFHGQTVLHRAPQKGRLGDTRQLGDGELMHSILGTKVAYDFRSADVRAGGQGAPLAAAYHTALLRSAGTGDDTAILNLGGVANITWSDGEGNFVAFDTGPANAPLNDFIKSHGLGEMDRDGALGRAGKVDETRLAKLLEHPYLSAAYPKSLDRFDFGASMADGLSVEDGAATLSAFTASAVGKALDLLPRRPKKLVVSGGGRHNPTIMSMLETHAGVTPIGAEMFGWRGDAVEAECFAFLAVRVLRGLPISFPGTTGVPAPMRGGRLAE.

12-20 (GTVLDGNID) is a binding site for ATP.

The protein belongs to the anhydro-N-acetylmuramic acid kinase family.

The enzyme catalyses 1,6-anhydro-N-acetyl-beta-muramate + ATP + H2O = N-acetyl-D-muramate 6-phosphate + ADP + H(+). It functions in the pathway amino-sugar metabolism; 1,6-anhydro-N-acetylmuramate degradation. It participates in cell wall biogenesis; peptidoglycan recycling. Its function is as follows. Catalyzes the specific phosphorylation of 1,6-anhydro-N-acetylmuramic acid (anhMurNAc) with the simultaneous cleavage of the 1,6-anhydro ring, generating MurNAc-6-P. Is required for the utilization of anhMurNAc either imported from the medium or derived from its own cell wall murein, and thus plays a role in cell wall recycling. In Rhizobium rhizogenes (strain K84 / ATCC BAA-868) (Agrobacterium radiobacter), this protein is Anhydro-N-acetylmuramic acid kinase.